The sequence spans 417 residues: MDVERLQEALKDFEKRGKKEVCPVLDQFLCHVAKTGETMIQWSQFKGYFIFKLEKVMDDFRTSAPEPRGPPNPNVEYIPFDEMKERILKIVTGFNGIPFTIQRLCELLTDPRRNYTGTDKFLRGVEKNVMVVSCVYPSSEKNNSSSLNRMNGVMFPGNSPSYTERSNINGPGTPRPLNRPKVSLSAPMTTNGLPESTDSKEANLQQNEEKSHSDSSTSESEVSSVSPLKNKHPDEDAVEAEGHEVKRLRFDKEGEVRETASQTTSSEISSAVVGETETSSSSQDKDKDSRCTRQHCTEEDEEEDEEEEEESFMTSREMIPERKNQEKESDDALTVNEETSEENNQMEESDVSQAEKDLLHSEGSENEGPVSNDSSDCHETEELVGSNSSKTGEILSESSMENDDEATEVTDEPMEQD.

Composition is skewed to polar residues over residues 140 to 149 (EKNNSSSLNR), 158 to 170 (NSPS…NING), and 186 to 196 (APMTTNGLPES). The interval 140 to 417 (EKNNSSSLNR…EVTDEPMEQD (278 aa)) is disordered. Serine 159 carries the phosphoserine modification. Over residues 197 to 213 (TDSKEANLQQNEEKSHS) the composition is skewed to basic and acidic residues. Over residues 214–226 (DSSTSESEVSSVS) the composition is skewed to low complexity. A Phosphoserine modification is found at serine 226. Over residues 231–258 (KHPDEDAVEAEGHEVKRLRFDKEGEVRE) the composition is skewed to basic and acidic residues. The span at 259–269 (TASQTTSSEIS) shows a compositional bias: polar residues. A compositionally biased stretch (basic and acidic residues) spans 283 to 297 (QDKDKDSRCTRQHCT). Residues 298–311 (EEDEEEDEEEEEES) are compositionally biased toward acidic residues. Residues 318–327 (MIPERKNQEK) show a composition bias toward basic and acidic residues. Residues 338–350 (ETSEENNQMEESD) show a composition bias toward acidic residues. The span at 353–363 (QAEKDLLHSEG) shows a compositional bias: basic and acidic residues. A compositionally biased stretch (polar residues) spans 385–399 (GSNSSKTGEILSESS). Acidic residues predominate over residues 400–417 (MENDDEATEVTDEPMEQD).

It belongs to the PPP4R2 family. In terms of assembly, serine/threonine-protein phosphatase 4 (PP4) occurs in different assemblies of the catalytic and one or more regulatory subunits. Component of the PP4 complexes PPP4C-PPP4R2, PPP4C-PPP4R2-PPP4R3A and PPP4C-PPP4R2-PPP4R3B. The PPP4C-PPP4R2 complex appears to be a tetramer composed of 2 molecules of PPP4C and 2 molecules of PPP4R2. Interacts with DDX20/GEMIN3 and GEMIN4. Interacts with RPA2; this DNA damage-dependent interaction recruits PPP4C leading to RPA2 dephosphorylation.

Its subcellular location is the cytoplasm. The protein localises to the cytoskeleton. It is found in the microtubule organizing center. It localises to the centrosome. The protein resides in the nucleus. Regulatory subunit of serine/threonine-protein phosphatase 4 (PP4). May regulate the activity of PPP4C at centrosomal microtubule organizing centers. Its interaction with the SMN complex leads to enhance the temporal localization of snRNPs, suggesting a role of PPP4C in maturation of spliceosomal snRNPs. The PPP4C-PPP4R2-PPP4R3A PP4 complex specifically dephosphorylates H2AX phosphorylated on 'Ser-140' (gamma-H2AX) generated during DNA replication and required for DNA double strand break repair. Mediates RPA2 dephosphorylation by recruiting PPP4C to RPA2 in a DNA damage-dependent manner. RPA2 dephosphorylation is required for the efficient RPA2-mediated recruitment of RAD51 to chromatin following double strand breaks, an essential step for DNA repair. The protein is Serine/threonine-protein phosphatase 4 regulatory subunit 2 (PPP4R2) of Pongo abelii (Sumatran orangutan).